The sequence spans 391 residues: GDP-mannose transporter (391 aa).

Basic and acidic residues predominate over residues 1–11; that stretch reads MDDKKNEDVEM. The interval 1–28 is disordered; it reads MDDKKNEDVEMRNFNGRSSPSQRDPFIS. Over 1-44 the chain is Cytoplasmic; sequence MDDKKNEDVEMRNFNGRSSPSQRDPFISKPGAAKRGGSSFDLSN. The helical transmembrane segment at 45–65 threads the bilayer; it reads VTNSPGISILAYCLASISMTV. Topologically, residues 66 to 75 are lumenal; it reads TNKYCVSGSN. Residues 76–96 form a helical membrane-spanning segment; sequence WNLNFFYLAIQSVVCIIAIII. Residues 97–115 lie on the Cytoplasmic side of the membrane; sequence CKQAGLITNLAPFDTKKAK. The helical transmembrane segment at 116 to 138 threads the bilayer; the sequence is TWFPISLLLVGMIYTSTKALQFL. Residues 139–141 are Lumenal-facing; the sequence is SVP. Residues 142–164 form a helical membrane-spanning segment; it reads VYTIFKNLTIIVIAYGEVLWFGG. The Cytoplasmic portion of the chain corresponds to 165–170; sequence SVTPSA. Residues 171–193 traverse the membrane as a helical segment; that stretch reads LFSFGLMVLSSVVAAWADIQHAL. At 194–209 the chain is on the lumenal side; the sequence is YGGGATQTKEAADALS. Residues 210-230 traverse the membrane as a helical segment; it reads TLNAGYAWMGMNVFCTAAYVL. The Cytoplasmic segment spans residues 231–245; that stretch reads SMRKVIKKMNFKDWD. Residues 246–266 form a helical membrane-spanning segment; the sequence is TMFYNNLLTIPVLFVCSFVFE. 2 N-linked (GlcNAc...) asparagine glycosylation sites follow: Asn-267 and Asn-272. Residues 267 to 284 lie on the Lumenal side of the membrane; that stretch reads NWSSENLTKNFPLETRNN. Residues 285 to 305 traverse the membrane as a helical segment; sequence LILGMIYSGLATIFISYCSAW. Over 306–313 the chain is Cytoplasmic; it reads CIRVTSST. Residues 314-336 form a helical membrane-spanning segment; sequence TYSMVGALNKLPIAVSGLVFFAA. At 337–339 the chain is on the lumenal side; that stretch reads PVT. A helical transmembrane segment spans residues 340-359; that stretch reads FGSVSAIFIGFVSGIVYAWA. The Cytoplasmic segment spans residues 360-391; sequence KVRQNQSKGSVLPTTQPVMSASSQSNRDAAKA. The tract at residues 369–391 is disordered; it reads SVLPTTQPVMSASSQSNRDAAKA.

Belongs to the TPT transporter family. SLC35D subfamily. As to quaternary structure, homooligomer.

The protein resides in the golgi apparatus membrane. It is found in the cytoplasmic vesicle membrane. It localises to the endoplasmic reticulum membrane. Its function is as follows. Involved in the import of GDP-mannose from the cytoplasm into the Golgi lumen. The polypeptide is GDP-mannose transporter (vrg4) (Sclerotinia sclerotiorum (strain ATCC 18683 / 1980 / Ss-1) (White mold)).